The chain runs to 422 residues: Enolase (422 aa).

Gln162 is a binding site for (2R)-2-phosphoglycerate. Catalysis depends on Glu204, which acts as the Proton donor. Residues Asp241, Glu285, and Asp312 each contribute to the Mg(2+) site. (2R)-2-phosphoglycerate contacts are provided by Lys337, Arg366, Ser367, and Lys388. Lys337 (proton acceptor) is an active-site residue.

It belongs to the enolase family. The cofactor is Mg(2+).

It localises to the cytoplasm. The protein localises to the secreted. The protein resides in the cell surface. It carries out the reaction (2R)-2-phosphoglycerate = phosphoenolpyruvate + H2O. It participates in carbohydrate degradation; glycolysis; pyruvate from D-glyceraldehyde 3-phosphate: step 4/5. Catalyzes the reversible conversion of 2-phosphoglycerate (2-PG) into phosphoenolpyruvate (PEP). It is essential for the degradation of carbohydrates via glycolysis. The protein is Enolase of Streptococcus thermophilus.